Consider the following 103-residue polypeptide: Large ribosomal subunit protein bL21 (103 aa).

It belongs to the bacterial ribosomal protein bL21 family. In terms of assembly, part of the 50S ribosomal subunit. Contacts protein L20.

This protein binds to 23S rRNA in the presence of protein L20. The protein is Large ribosomal subunit protein bL21 of Ruthia magnifica subsp. Calyptogena magnifica.